We begin with the raw amino-acid sequence, 336 residues long: Dihydroorotate dehydrogenase (quinone) (336 aa).

Residues 62-66 (AGLDK) and Thr86 contribute to the FMN site. Lys66 serves as a coordination point for substrate. Residue 111–115 (NRMGF) coordinates substrate. Asn139 and Asn172 together coordinate FMN. Asn172 contacts substrate. Ser175 (nucleophile) is an active-site residue. A substrate-binding site is contributed by Asn177. FMN contacts are provided by Lys217 and Thr245. 246 to 247 (NT) serves as a coordination point for substrate. FMN is bound by residues Gly268, Gly297, and 318 to 319 (YS).

Belongs to the dihydroorotate dehydrogenase family. Type 2 subfamily. As to quaternary structure, monomer. The cofactor is FMN.

The protein resides in the cell membrane. It catalyses the reaction (S)-dihydroorotate + a quinone = orotate + a quinol. The protein operates within pyrimidine metabolism; UMP biosynthesis via de novo pathway; orotate from (S)-dihydroorotate (quinone route): step 1/1. Functionally, catalyzes the conversion of dihydroorotate to orotate with quinone as electron acceptor. The protein is Dihydroorotate dehydrogenase (quinone) of Serratia proteamaculans (strain 568).